The following is a 396-amino-acid chain: Acetylornithine aminotransferase 2 (396 aa).

Pyridoxal 5'-phosphate is bound by residues 102–103 (GA) and Phe134. Arg137 provides a ligand contact to N(2)-acetyl-L-ornithine. 219–222 (DEVQ) lines the pyridoxal 5'-phosphate pocket. Residue Lys248 is modified to N6-(pyridoxal phosphate)lysine. Thr276 serves as a coordination point for pyridoxal 5'-phosphate.

Belongs to the class-III pyridoxal-phosphate-dependent aminotransferase family. ArgD subfamily. In terms of assembly, homodimer. Pyridoxal 5'-phosphate is required as a cofactor.

The protein localises to the cytoplasm. The catalysed reaction is N(2)-acetyl-L-ornithine + 2-oxoglutarate = N-acetyl-L-glutamate 5-semialdehyde + L-glutamate. It participates in amino-acid biosynthesis; L-arginine biosynthesis; N(2)-acetyl-L-ornithine from L-glutamate: step 4/4. The polypeptide is Acetylornithine aminotransferase 2 (Bordetella parapertussis (strain 12822 / ATCC BAA-587 / NCTC 13253)).